Consider the following 467-residue polypeptide: Siroheme synthase (467 aa).

The tract at residues 1–203 is precorrin-2 dehydrogenase /sirohydrochlorin ferrochelatase; sequence METLPIFMKL…GQEEAARHAM (203 aa). NAD(+) is bound by residues 22–23 and 43–44; these read EI and PE. A Phosphoserine modification is found at Ser128. The uroporphyrinogen-III C-methyltransferase stretch occupies residues 216–467; it reads GEVYLVGGGP…APSPEVVSAG (252 aa). Pro225 contributes to the S-adenosyl-L-methionine binding site. Asp248 serves as the catalytic Proton acceptor. Residue Lys270 is the Proton donor of the active site. Residues 301–303, Ile306, 331–332, Met383, and Gly412 contribute to the S-adenosyl-L-methionine site; these read GGD and TA.

It in the N-terminal section; belongs to the precorrin-2 dehydrogenase / sirohydrochlorin ferrochelatase family. This sequence in the C-terminal section; belongs to the precorrin methyltransferase family.

The enzyme catalyses uroporphyrinogen III + 2 S-adenosyl-L-methionine = precorrin-2 + 2 S-adenosyl-L-homocysteine + H(+). It carries out the reaction precorrin-2 + NAD(+) = sirohydrochlorin + NADH + 2 H(+). It catalyses the reaction siroheme + 2 H(+) = sirohydrochlorin + Fe(2+). It functions in the pathway cofactor biosynthesis; adenosylcobalamin biosynthesis; precorrin-2 from uroporphyrinogen III: step 1/1. The protein operates within cofactor biosynthesis; adenosylcobalamin biosynthesis; sirohydrochlorin from precorrin-2: step 1/1. Its pathway is porphyrin-containing compound metabolism; siroheme biosynthesis; precorrin-2 from uroporphyrinogen III: step 1/1. It participates in porphyrin-containing compound metabolism; siroheme biosynthesis; siroheme from sirohydrochlorin: step 1/1. It functions in the pathway porphyrin-containing compound metabolism; siroheme biosynthesis; sirohydrochlorin from precorrin-2: step 1/1. Its function is as follows. Multifunctional enzyme that catalyzes the SAM-dependent methylations of uroporphyrinogen III at position C-2 and C-7 to form precorrin-2 via precorrin-1. Then it catalyzes the NAD-dependent ring dehydrogenation of precorrin-2 to yield sirohydrochlorin. Finally, it catalyzes the ferrochelation of sirohydrochlorin to yield siroheme. In Methylobacillus flagellatus (strain ATCC 51484 / DSM 6875 / VKM B-1610 / KT), this protein is Siroheme synthase.